Consider the following 322-residue polypeptide: MLNSFKLSLQYILPKLWLTRLAGWGASKRAGWLTKLVIDLFVKYYKVDMTEAQKPDTASYRTFNDFFVRPLRDDVRPLNTDPNILVMPADGVISQLGRIEEEKILQAKGHNYSLEALLAGNYLMADKFRNGTFVTTYLSPRDYHRVHMPCNGILREMIYVPGDLFSVNHLTAQNVPNLFARNERVICLFDTEFGPMAQILVGATIVGSIETVWAGTITPPREGIIKRWTWPEGEHEGSVALLKGQEMGRFKLGSTVINLFAPGKVNLIASLASLSVTKIGQPLATSTETFVAPEVEPAPLPTEEIKAEHDASPLVDNKKDDT.

Active-site charge relay system; for autoendoproteolytic cleavage activity residues include Asp90, His147, and Ser254. Catalysis depends on Ser254, which acts as the Schiff-base intermediate with substrate; via pyruvic acid; for decarboxylase activity. Ser254 is modified (pyruvic acid (Ser); by autocatalysis). A disordered region spans residues Val295–Thr322. Over residues Glu303–Thr322 the composition is skewed to basic and acidic residues.

Belongs to the phosphatidylserine decarboxylase family. PSD-B subfamily. Prokaryotic type I sub-subfamily. In terms of assembly, heterodimer of a large membrane-associated beta subunit and a small pyruvoyl-containing alpha subunit. Requires pyruvate as cofactor. Is synthesized initially as an inactive proenzyme. Formation of the active enzyme involves a self-maturation process in which the active site pyruvoyl group is generated from an internal serine residue via an autocatalytic post-translational modification. Two non-identical subunits are generated from the proenzyme in this reaction, and the pyruvate is formed at the N-terminus of the alpha chain, which is derived from the carboxyl end of the proenzyme. The autoendoproteolytic cleavage occurs by a canonical serine protease mechanism, in which the side chain hydroxyl group of the serine supplies its oxygen atom to form the C-terminus of the beta chain, while the remainder of the serine residue undergoes an oxidative deamination to produce ammonia and the pyruvoyl prosthetic group on the alpha chain. During this reaction, the Ser that is part of the protease active site of the proenzyme becomes the pyruvoyl prosthetic group, which constitutes an essential element of the active site of the mature decarboxylase.

Its subcellular location is the cell membrane. It catalyses the reaction a 1,2-diacyl-sn-glycero-3-phospho-L-serine + H(+) = a 1,2-diacyl-sn-glycero-3-phosphoethanolamine + CO2. It participates in phospholipid metabolism; phosphatidylethanolamine biosynthesis; phosphatidylethanolamine from CDP-diacylglycerol: step 2/2. Functionally, catalyzes the formation of phosphatidylethanolamine (PtdEtn) from phosphatidylserine (PtdSer). This Salmonella agona (strain SL483) protein is Phosphatidylserine decarboxylase proenzyme.